The primary structure comprises 665 residues: Adenylate cyclase 1 (665 aa).

Residues 1–25 are disordered; sequence MLQRSESGFKDIESMQDSNADKPSR. Positions 7 to 24 are enriched in basic and acidic residues; sequence SGFKDIESMQDSNADKPS. A run of 2 helical transmembrane segments spans residues 33-53 and 373-393; these read SLLG…LVGL and AVSG…AHLI. One can recognise an HAMP domain in the interval 394–444; the sequence is TKSLNQLTDSANRLQDLDFATPIDVSSHVAEISTLNGAMNRARDAIFTFAL. In terms of domain architecture, Guanylate cyclase spans 471–603; it reads TAMFTDIYDF…DTVNVASRLE (133 aa). Residues Asp476 and Asp520 each coordinate Mg(2+).

The protein belongs to the adenylyl cyclase class-3 family. The cofactor is Mg(2+).

It is found in the cell membrane. The catalysed reaction is ATP = 3',5'-cyclic AMP + diphosphate. Its function is as follows. Plays essential roles in regulation of cellular metabolism by catalyzing the synthesis of a second messenger, cAMP. This Rhizobium meliloti (strain 1021) (Ensifer meliloti) protein is Adenylate cyclase 1 (cya1).